Here is a 93-residue protein sequence, read N- to C-terminus: Protein BOLA2 (93 aa).

Cys-29 carries the S-glutathionyl cysteine; transient; alternate modification. The segment at 72 to 93 is disordered; sequence KAQTPQQWKPPSQDSATLTKDA.

Belongs to the bolA/yrbA family. Homodimer. Interacts in vitro with GRXS14, GRXS15, GRXS16 and GRXS17, but not with GRXC5. Interacts in vivo only with GRXS17. In terms of processing, can be either glutathionylated or forming covalent homodimers, depending on the oxidation state.

Its subcellular location is the cytoplasm. The protein resides in the nucleus. Its function is as follows. May act either alone or in interaction with glutaredoxin as a redox-regulated transcriptional regulator, or as a factor regulating Fe-S cluster biogenesis. The GRXS17-BOLA2 heterodimer binds a labile, oxygen sensitive iron-sulfur cluster. The polypeptide is Protein BOLA2 (Arabidopsis thaliana (Mouse-ear cress)).